The following is a 114-amino-acid chain: T cell receptor beta variable 6-4 (114 aa).

The N-terminal stretch at 1–21 (MSIRLLCCVAFSLLWAGPVTA) is a signal peptide. An Ig-like domain is found at 22-114 (GITQAPTSQI…TSVYFCASSD (93 aa)). Cysteine 42 and cysteine 110 are oxidised to a cystine.

As to quaternary structure, alpha-beta TR is a heterodimer composed of an alpha and beta chain; disulfide-linked. The alpha-beta TR is associated with the transmembrane signaling CD3 coreceptor proteins to form the TR-CD3 (TcR or TCR). The assembly of alpha-beta TR heterodimers with CD3 occurs in the endoplasmic reticulum where a single alpha-beta TR heterodimer associates with one CD3D-CD3E heterodimer, one CD3G-CD3E heterodimer and one CD247 homodimer forming a stable octameric structure. CD3D-CD3E and CD3G-CD3E heterodimers preferentially associate with TR alpha and TR beta chains, respectively. The association of the CD247 homodimer is the last step of TcR assembly in the endoplasmic reticulum and is required for transport to the cell surface.

The protein resides in the cell membrane. V region of the variable domain of T cell receptor (TR) beta chain that participates in the antigen recognition. Alpha-beta T cell receptors are antigen specific receptors which are essential to the immune response and are present on the cell surface of T lymphocytes. Recognize peptide-major histocompatibility (MH) (pMH) complexes that are displayed by antigen presenting cells (APC), a prerequisite for efficient T cell adaptive immunity against pathogens. Binding of alpha-beta TR to pMH complex initiates TR-CD3 clustering on the cell surface and intracellular activation of LCK that phosphorylates the ITAM motifs of CD3G, CD3D, CD3E and CD247 enabling the recruitment of ZAP70. In turn ZAP70 phosphorylates LAT, which recruits numerous signaling molecules to form the LAT signalosome. The LAT signalosome propagates signal branching to three major signaling pathways, the calcium, the mitogen-activated protein kinase (MAPK) kinase and the nuclear factor NF-kappa-B (NF-kB) pathways, leading to the mobilization of transcription factors that are critical for gene expression and essential for T cell growth and differentiation. The T cell repertoire is generated in the thymus, by V-(D)-J rearrangement. This repertoire is then shaped by intrathymic selection events to generate a peripheral T cell pool of self-MH restricted, non-autoaggressive T cells. Post-thymic interaction of alpha-beta TR with the pMH complexes shapes TR structural and functional avidity. The polypeptide is T cell receptor beta variable 6-4 (Homo sapiens (Human)).